Here is a 386-residue protein sequence, read N- to C-terminus: S-adenosylmethionine synthase (386 aa).

An ATP-binding site is contributed by His-17. Asp-19 contributes to the Mg(2+) binding site. Glu-45 contributes to the K(+) binding site. Positions 58 and 101 each coordinate L-methionine. The flexible loop stretch occupies residues 101 to 111 (QSPDISQGVTE). ATP contacts are provided by residues 168–170 (DAK), Asp-242, 248–249 (RK), Ala-265, and Lys-269. Residue Asp-242 participates in L-methionine binding. Lys-273 lines the L-methionine pocket.

The protein belongs to the AdoMet synthase family. As to quaternary structure, homotetramer; dimer of dimers. Mg(2+) is required as a cofactor. The cofactor is K(+).

The protein resides in the cytoplasm. It catalyses the reaction L-methionine + ATP + H2O = S-adenosyl-L-methionine + phosphate + diphosphate. Its pathway is amino-acid biosynthesis; S-adenosyl-L-methionine biosynthesis; S-adenosyl-L-methionine from L-methionine: step 1/1. Catalyzes the formation of S-adenosylmethionine (AdoMet) from methionine and ATP. The overall synthetic reaction is composed of two sequential steps, AdoMet formation and the subsequent tripolyphosphate hydrolysis which occurs prior to release of AdoMet from the enzyme. The protein is S-adenosylmethionine synthase of Leptospira interrogans serogroup Icterohaemorrhagiae serovar copenhageni (strain Fiocruz L1-130).